Consider the following 486-residue polypeptide: Deleted in azoospermia protein 3 (486 aa).

The span at 1-10 (MSAANPETPN) shows a compositional bias: polar residues. Residues 1-27 (MSAANPETPNSTISREASTQSSSAAAS) are disordered. The span at 11-27 (STISREASTQSSSAAAS) shows a compositional bias: low complexity. One can recognise an RRM domain in the interval 40 to 115 (NTVFVGGIDA…KKLKLGPAIR (76 aa)). DAZ domains lie at 167–190 (AYSA…YNYQ), 191–214 (EYPT…YNYQ), 215–238 (PFPA…YNYQ), 239–262 (AFPA…YNYQ), 263–286 (PFPA…YNYQ), 287–310 (AFPA…YNYQ), 311–334 (AFPA…YNYQ), 335–358 (AFPA…YNYQ), 359–382 (AFPA…YNYQ), 383–406 (AFPA…YNYQ), 407–430 (AFPA…YNYQ), and 431–454 (AFPA…YNYQ).

Belongs to the RRM DAZ family. Forms a heterodimer with BOLL and DAZL. Interacts with PUM2, DAZAP1, DAZAP2, DZIP1 and DZIP3. Testis specific.

The protein localises to the cytoplasm. Its subcellular location is the nucleus. Functionally, RNA-binding protein that plays an essential role in spermatogenesis. May act by binding to the 3'-UTR of mRNAs and regulating their translation. The sequence is that of Deleted in azoospermia protein 3 (DAZ3) from Homo sapiens (Human).